We begin with the raw amino-acid sequence, 423 residues long: Serine--tRNA ligase (423 aa).

L-serine is bound at residue 231-233 (TAE). Position 262–264 (262–264 (RSE)) interacts with ATP. Position 285 (E285) interacts with L-serine. Residue 349–352 (EISS) coordinates ATP. S384 contacts L-serine.

The protein belongs to the class-II aminoacyl-tRNA synthetase family. Type-1 seryl-tRNA synthetase subfamily. In terms of assembly, homodimer. The tRNA molecule binds across the dimer.

It localises to the cytoplasm. The enzyme catalyses tRNA(Ser) + L-serine + ATP = L-seryl-tRNA(Ser) + AMP + diphosphate + H(+). It carries out the reaction tRNA(Sec) + L-serine + ATP = L-seryl-tRNA(Sec) + AMP + diphosphate + H(+). Its pathway is aminoacyl-tRNA biosynthesis; selenocysteinyl-tRNA(Sec) biosynthesis; L-seryl-tRNA(Sec) from L-serine and tRNA(Sec): step 1/1. Functionally, catalyzes the attachment of serine to tRNA(Ser). Is also able to aminoacylate tRNA(Sec) with serine, to form the misacylated tRNA L-seryl-tRNA(Sec), which will be further converted into selenocysteinyl-tRNA(Sec). The polypeptide is Serine--tRNA ligase (Lactococcus lactis subsp. cremoris (strain MG1363)).